Consider the following 206-residue polypeptide: Eukaryotic translation initiation factor isoform 4E-2 (206 aa).

A disulfide bond links Cys103 and Cys142.

Belongs to the eukaryotic initiation factor 4E family. EIF4F is a multi-subunit complex, the composition of which varies with external and internal environmental conditions. It is composed of at least EIF4A, EIF4E and EIF4G. EIF4E is also known to interact with other partners. In higher plants two isoforms of EIF4F have been identified, named isoform EIF4F and isoform EIF(iso)4F. Isoform EIF4F has subunits p220 and p26, whereas isoform EIF(iso)4F has subunits p82 and p28. In terms of processing, according to the redox status, the Cys-103-Cys-142 disulfide bridge may have a role in regulating protein function by affecting its ability to bind capped mRNA.

Functionally, recognizes and binds the 7-methylguanosine-containing mRNA cap during an early step in the initiation of protein synthesis and facilitates ribosome binding by inducing the unwinding of the mRNAs secondary structures. In Oryza sativa subsp. japonica (Rice), this protein is Eukaryotic translation initiation factor isoform 4E-2.